The following is a 236-amino-acid chain: Small ribosomal subunit protein uS3 (236 aa).

Residues 39-107 (IREILHKELK…DVVINIVEIR (69 aa)) enclose the KH type-2 domain. The segment at 213-236 (MAQDKRMNEGGGESSQPRSRRDAA) is disordered.

This sequence belongs to the universal ribosomal protein uS3 family. In terms of assembly, part of the 30S ribosomal subunit. Forms a tight complex with proteins S10 and S14.

Binds the lower part of the 30S subunit head. Binds mRNA in the 70S ribosome, positioning it for translation. This Bradyrhizobium sp. (strain BTAi1 / ATCC BAA-1182) protein is Small ribosomal subunit protein uS3.